The primary structure comprises 562 residues: Arf-GAP domain and FG repeat-containing protein 1 (562 aa).

The region spanning glutamate 11–valine 135 is the Arf-GAP domain. The segment at cysteine 29–cysteine 52 adopts a C4-type zinc-finger fold. At serine 167 the chain carries Phosphoserine. The interval alanine 168–lysine 194 is disordered. Polar residues predominate over residues glycine 176 to glutamine 191. At threonine 177 the chain carries Phosphothreonine. Serine 181 and serine 362 each carry phosphoserine. Serine 367 carries O-linked (GlcNAc) serine glycosylation.

As to quaternary structure, interacts with EPS15R and EPS15. Interacts with FCHO1. Post-translationally, O-glycosylated.

It localises to the nucleus. The protein localises to the cytoplasmic vesicle. Required for vesicle docking or fusion during acrosome biogenesis. May play a role in RNA trafficking or localization. This is Arf-GAP domain and FG repeat-containing protein 1 (AGFG1) from Bos taurus (Bovine).